A 238-amino-acid chain; its full sequence is Pyridoxine 5'-phosphate synthase (238 aa).

Asparagine 9 contributes to the 3-amino-2-oxopropyl phosphate binding site. Aspartate 11–histidine 12 lines the 1-deoxy-D-xylulose 5-phosphate pocket. Arginine 20 contributes to the 3-amino-2-oxopropyl phosphate binding site. Histidine 45 (proton acceptor) is an active-site residue. Positions 47 and 52 each coordinate 1-deoxy-D-xylulose 5-phosphate. The Proton acceptor role is filled by glutamate 72. Threonine 102 contacts 1-deoxy-D-xylulose 5-phosphate. Histidine 189 (proton donor) is an active-site residue. Residues glycine 190 and glycine 211–histidine 212 contribute to the 3-amino-2-oxopropyl phosphate site.

This sequence belongs to the PNP synthase family. Homooctamer; tetramer of dimers.

It localises to the cytoplasm. The catalysed reaction is 3-amino-2-oxopropyl phosphate + 1-deoxy-D-xylulose 5-phosphate = pyridoxine 5'-phosphate + phosphate + 2 H2O + H(+). It participates in cofactor biosynthesis; pyridoxine 5'-phosphate biosynthesis; pyridoxine 5'-phosphate from D-erythrose 4-phosphate: step 5/5. Its function is as follows. Catalyzes the complicated ring closure reaction between the two acyclic compounds 1-deoxy-D-xylulose-5-phosphate (DXP) and 3-amino-2-oxopropyl phosphate (1-amino-acetone-3-phosphate or AAP) to form pyridoxine 5'-phosphate (PNP) and inorganic phosphate. This is Pyridoxine 5'-phosphate synthase from Ehrlichia ruminantium (strain Welgevonden).